Reading from the N-terminus, the 387-residue chain is Deoxyguanosinetriphosphate triphosphohydrolase-like protein (387 aa).

Positions 78–209 constitute an HD domain; that stretch reads RLTHSLEVAQ…ANLADEVAYN (132 aa).

This sequence belongs to the dGTPase family. Type 2 subfamily.

This is Deoxyguanosinetriphosphate triphosphohydrolase-like protein from Ralstonia nicotianae (strain ATCC BAA-1114 / GMI1000) (Ralstonia solanacearum).